Consider the following 1829-residue polypeptide: Afadin (1829 aa).

Residues 39 to 133 form the Ras-associating 1 domain; that stretch reads FHGVMRFYFQ…GRFVLKNEND (95 aa). Residues 129-196 are disordered; it reads KNENDAIPAK…PSQGDDSENS (68 aa). A coiled-coil region spans residues 146 to 186; the sequence is EKQEKEGVIQNFKRTLSKKEKKEKKKREKEALRQASDKEER. The segment covering 160-172 has biased composition (basic residues); that stretch reads TLSKKEKKEKKKR. Over residues 173-189 the composition is skewed to basic and acidic residues; it reads EKEALRQASDKEERPSQ. Residues Ser216, Ser246, and Ser256 each carry the phosphoserine modification. Residues 246-348 enclose the Ras-associating 2 domain; that stretch reads SGGTLRIYAD…LVFQLKRRPP (103 aa). Over residues 356–371 the composition is skewed to basic and acidic residues; sequence KKHVEGKPLKGKDRAD. The interval 356–377 is disordered; sequence KKHVEGKPLKGKDRADGSGYGS. Phosphoserine occurs at positions 391 and 424. Residues 441–507 form the FHA domain; sequence FGPGIQPHHC…KFVDPIQDHV (67 aa). Ser512, Ser557, Ser562, Ser589, and Ser655 each carry phosphoserine. The interval 539-595 is disordered; sequence DIHSGTALPASRSTTRLDSDRVSSASSTAERGMVKPMIRLDQEQDYRRRESRTQDAA. A compositionally biased stretch (basic and acidic residues) spans 576–591; it reads IRLDQEQDYRRRESRT. Residues 668 to 915 form the Dilute domain; it reads NKMVSMMEGV…IENVVAVAEN (248 aa). Residues 1014–1100 enclose the PDZ domain; it reads VITVTLKKQN…VVTLEVAKQG (87 aa). Phosphoserine occurs at positions 1090, 1114, 1133, 1147, 1150, 1179, 1180, 1189, and 1206. The segment at 1114–1230 is disordered; that stretch reads SPMMQRISDR…PRPEAYPIPT (117 aa). Residues 1120 to 1135 show a composition bias toward basic and acidic residues; that stretch reads ISDRRGSGKPRPKSEG. The segment covering 1139 to 1150 has biased composition (polar residues); sequence YNNSAQNGSPES. Positions 1159 to 1179 are enriched in basic and acidic residues; it reads SEPKKLPGDDRLMKNRADHRS. Polar residues predominate over residues 1195–1217; that stretch reads PYTSGTAAKITSVSTGNLCTEEQ. 2 positions are modified to phosphothreonine: Thr1218 and Thr1239. Residues Ser1245 and Ser1282 each carry the phosphoserine modification. The span at 1300–1309 shows a compositional bias: basic and acidic residues; the sequence is ESGMDRKCDS. Disordered regions lie at residues 1300-1533 and 1574-1724; these read ESGM…EKQQ and RLQE…KTQV. Residues 1316 to 1325 are compositionally biased toward low complexity; the sequence is SSSVESSTSS. Residues 1332–1344 are compositionally biased toward polar residues; sequence SSKSVTPASTLTK. Phosphoserine is present on Ser1335. Thr1337 is subject to Phosphothreonine. Residues 1371-1380 show a composition bias toward pro residues; sequence LPPPPPPPPA. The span at 1401-1412 shows a compositional bias: low complexity; that stretch reads NQAAPQSAQVAA. The span at 1413 to 1447 shows a compositional bias: basic and acidic residues; sequence AERKKREEHQRWYEKEKARLEEERERKRREQERKL. Positions 1417 to 1454 form a coiled coil; the sequence is KREEHQRWYEKEKARLEEERERKRREQERKLGQMRTQS. Residues 1450–1464 show a composition bias toward polar residues; that stretch reads MRTQSLNPASFSPLA. A compositionally biased stretch (basic and acidic residues) spans 1494-1510; sequence TIERRDLQYITISKEEL. Ser1506 and Ser1517 each carry phosphoserine. The span at 1520 to 1533 shows a compositional bias: basic and acidic residues; sequence PWKRDAREKLEKQQ. Residues 1530–1564 are a coiled coil; the sequence is EKQQQMHIVDMLSKEIHELQNKGDRTAEESDRLRK. A compositionally biased stretch (acidic residues) spans 1583-1594; it reads EDDDEEEDDDVD. Positions 1600–1672 form a coiled coil; sequence QRLEAERRAR…SRLEAERRRQ (73 aa). The segment covering 1602–1682 has biased composition (basic and acidic residues); it reads LEAERRARLQ…HEEAARRLLE (81 aa). Ser1701 carries the post-translational modification Phosphoserine. Residues 1715 to 1724 show a composition bias toward polar residues; the sequence is RNASYLKTQV. Phosphoserine is present on Ser1726. The tract at residues 1742–1829 is disordered; sequence DEEENYVPAG…TELENELNTK (88 aa). A compositionally biased stretch (polar residues) spans 1753-1764; the sequence is NSYSGSAGTTAG. The span at 1768 to 1781 shows a compositional bias: basic and acidic residues; it reads APRDTREKLSRSQD. Residues Ser1779 and Ser1804 each carry the phosphoserine modification. Residues 1809-1829 are compositionally biased toward basic and acidic residues; the sequence is VSDKVKASRKLTELENELNTK. Position 1812 is an N6-acetyllysine (Lys1812).

Homodimer. Interacts with F-actin, nectin and NECTIN3. Essential for the association of nectin and E-cadherin. Isoform 2/s-afadin does not interact with F-actin. Interacts with ZO-1 and occludin, but probably in an indirect manner. Interacts with RIT1, RIT2, NRXN1 and BCR. Interacts with ADAM10; the interaction locks ADAM10 at adherens junctions following ADAM10 recruitment to adherens junctions by TSPAN33. In terms of tissue distribution, isoform 1 is widely expressed, including in heart, brain, spleen, lung, liver, skeletal muscle, kidney and testis. Isoform 2 is mainly expressed in the brain.

Its subcellular location is the cell junction. It localises to the adherens junction. In terms of biological role, belongs to an adhesion system, probably together with the E-cadherin-catenin system, which plays a role in the organization of homotypic, interneuronal and heterotypic cell-cell adherens junctions (AJs). Nectin- and actin-filament-binding protein that connects nectin to the actin cytoskeleton. May play a key role in the organization of epithelial structures of the embryonic ectoderm. Essential for the organization of adherens junctions. This is Afadin from Rattus norvegicus (Rat).